We begin with the raw amino-acid sequence, 454 residues long: UDP-N-acetylmuramoylalanine--D-glutamate ligase (454 aa).

Residue 115 to 121 (GTNGKTT) coordinates ATP.

Belongs to the MurCDEF family.

It localises to the cytoplasm. The catalysed reaction is UDP-N-acetyl-alpha-D-muramoyl-L-alanine + D-glutamate + ATP = UDP-N-acetyl-alpha-D-muramoyl-L-alanyl-D-glutamate + ADP + phosphate + H(+). It functions in the pathway cell wall biogenesis; peptidoglycan biosynthesis. Cell wall formation. Catalyzes the addition of glutamate to the nucleotide precursor UDP-N-acetylmuramoyl-L-alanine (UMA). This Thermoanaerobacter sp. (strain X514) protein is UDP-N-acetylmuramoylalanine--D-glutamate ligase.